A 179-amino-acid chain; its full sequence is Fucolectin-4 (179 aa).

The first 23 residues, 1–23, serve as a signal peptide directing secretion; that stretch reads MEVKTIMLLFQILAISTLKQGSA. The interval 31-179 is F5/8 type C-like; sequence EENVALRGRA…VEVNALLPVN (149 aa). 4 residues coordinate Ca(2+): Asn58, Asp61, Asn63, and Ser72. 3 disulfide bridges follow: Cys73–Cys168, Cys104–Cys105, and Cys130–Cys146. 2 residues coordinate alpha-L-fucose: His75 and Arg101. The Cell attachment site signature appears at 101-103; it reads RGD. Residue Arg108 participates in alpha-L-fucose binding. Residues Cys168 and Glu169 each coordinate Ca(2+).

This sequence belongs to the fucolectin family. Homotrimer. In terms of tissue distribution, gill mucous cells.

Its subcellular location is the secreted. In terms of biological role, acts as a defensive agent. Recognizes blood group fucosylated oligosaccharides including A, B, H and Lewis B-type antigens. Does not recognize Lewis A antigen and has low affinity for monovalent haptens. This is Fucolectin-4 from Anguilla japonica (Japanese eel).